Here is a 356-residue protein sequence, read N- to C-terminus: INO80 complex subunit B (356 aa).

The tract at residues 1–71 (MSKLWRRGST…PSPAKPQLKL (71 aa)) is disordered. Positions 33–51 (HGVHKKKHKKHKKKHKKKH) are enriched in basic residues. Phosphoserine is present on residues Ser-97, Ser-99, Ser-127, Ser-130, and Ser-132. Residues 124-150 (DEDSNLSPSPLRDLSGGLGGQEEEEEQ) form a disordered region. Positions 213-245 (LLKREERARKRRLQAARRAEEHKNQTIERLTKT) form a coiled coil. Disordered stretches follow at residues 246 to 269 (AATS…AAAP) and 286 to 310 (FPPG…PRCS). The segment at 305–336 (PPPRCSVPGCPHPRRYACSRTGQALCSLQCYR) adopts an HIT-type zinc-finger fold.

As to quaternary structure, component of the chromatin remodeling INO80 complex; specifically part of a complex module associated with the helicase ATP-binding and the helicase C-terminal domain of INO80. Interacts with RP9.

The protein resides in the nucleus. It is found in the nucleolus. Induces growth and cell cycle arrests at the G1 phase of the cell cycle. In terms of biological role, proposed core component of the chromatin remodeling INO80 complex which is involved in transcriptional regulation, DNA replication and probably DNA repair. The protein is INO80 complex subunit B (INO80B) of Homo sapiens (Human).